We begin with the raw amino-acid sequence, 350 residues long: tRNA uridine(34) hydroxylase (350 aa).

The region spanning 146–240 (DDPDAVFIDM…YARRARAQGL (95 aa)) is the Rhodanese domain. Cysteine 200 acts as the Cysteine persulfide intermediate in catalysis. Residues 319–328 (RRRRAGRENG) are compositionally biased toward basic and acidic residues. Positions 319 to 350 (RRRRAGRENGNKIFNKSRGRLNSKLSIPDPAE) are disordered.

It belongs to the TrhO family.

It carries out the reaction uridine(34) in tRNA + AH2 + O2 = 5-hydroxyuridine(34) in tRNA + A + H2O. Functionally, catalyzes oxygen-dependent 5-hydroxyuridine (ho5U) modification at position 34 in tRNAs. This Salmonella newport (strain SL254) protein is tRNA uridine(34) hydroxylase.